A 542-amino-acid chain; its full sequence is Trans-alpha-bergamotene synthase (542 aa).

Residues D295, D299, D439, T443, and E447 each contribute to the Mg(2+) site. The DDXXD motif motif lies at 295–299 (DDFYD).

The protein belongs to the terpene synthase family. Mg(2+) serves as cofactor.

The catalysed reaction is (2E,6E)-farnesyl diphosphate = (1S,5S,6R)-alpha-bergamotene + diphosphate. The protein operates within secondary metabolite biosynthesis; terpenoid biosynthesis. In terms of biological role, sesquiterpene synthase converting farnesyl diphosphate to trans-alpha-bergamotene as the major product. In Phyla dulcis (Aztec sweet herb), this protein is Trans-alpha-bergamotene synthase.